We begin with the raw amino-acid sequence, 177 residues long: Large ribosomal subunit protein uL6 (177 aa).

In terms of assembly, part of the 50S ribosomal subunit.

In terms of biological role, this protein binds to the 23S rRNA, and is important in its secondary structure. It is located near the subunit interface in the base of the L7/L12 stalk, and near the tRNA binding site of the peptidyltransferase center. This is Large ribosomal subunit protein uL6 from Rhodopseudomonas palustris (strain ATCC BAA-98 / CGA009).